Here is a 358-residue protein sequence, read N- to C-terminus: Peptide chain release factor 1 (358 aa).

Position 235 is an N5-methylglutamine (Gln-235).

The protein belongs to the prokaryotic/mitochondrial release factor family. Post-translationally, methylated by PrmC. Methylation increases the termination efficiency of RF1.

It localises to the cytoplasm. Functionally, peptide chain release factor 1 directs the termination of translation in response to the peptide chain termination codons UAG and UAA. The polypeptide is Peptide chain release factor 1 (Brachyspira hyodysenteriae (strain ATCC 49526 / WA1)).